The sequence spans 221 residues: Large ribosomal subunit protein uL3 (221 aa).

It belongs to the universal ribosomal protein uL3 family. In terms of assembly, part of the 50S ribosomal subunit. Forms a cluster with proteins L14 and L19.

Functionally, one of the primary rRNA binding proteins, it binds directly near the 3'-end of the 23S rRNA, where it nucleates assembly of the 50S subunit. In Chlamydia trachomatis serovar A (strain ATCC VR-571B / DSM 19440 / HAR-13), this protein is Large ribosomal subunit protein uL3.